A 970-amino-acid chain; its full sequence is Protein tweety (970 aa).

At 1–47 (MGDYHEFTDQYKVPVIAKLLHALPHYNITFHKINSTFRPNDEIYLES) the chain is on the extracellular side. Residues asparagine 27 and asparagine 34 are each glycosylated (N-linked (GlcNAc...) asparagine). The helical transmembrane segment at 48–68 (LGILGSVPAALLIVSLLGLLF) threads the bilayer. Topologically, residues 69-89 (YLMTRCCDRKPRPAHSITSLK) are cytoplasmic. Residues 90–110 (VALSIVTVMCCAAIGLGLYGN) form a helical membrane-spanning segment. Over 111-219 (DDLHNGLLEV…GDQWELIRWP (109 aa)) the chain is Extracellular. 3 N-linked (GlcNAc...) asparagine glycosylation sites follow: asparagine 136, asparagine 166, and asparagine 183. The chain crosses the membrane as a helical span at residues 220 to 240 (GTVATLALLLVLCAVLLVGVA). The Cytoplasmic portion of the chain corresponds to 241-246 (RHSRCA). Residues 247–267 (LILFSVCGLLAVTGSWLMSGL) traverse the membrane as a helical segment. The Extracellular portion of the chain corresponds to 268-395 (YLSSSVAVGD…RGLCEGGLLG (128 aa)). N-linked (GlcNAc...) asparagine glycosylation is present at asparagine 359. A helical transmembrane segment spans residues 396 to 416 (LVLMLIASFIAAILLTIMVWV). The Cytoplasmic portion of the chain corresponds to 417-970 (DSHTWIYIRK…DESNYAVTEL (554 aa)). A compositionally biased stretch (low complexity) spans 532 to 571 (NAAANMPPTTQAAQQQQQQQAQQQQQQAQQQLGGPQPIYC). Disordered stretches follow at residues 532 to 587 (NAAA…QHPH), 677 to 763 (RQNS…NESD), and 849 to 970 (MKAI…VTEL). Basic residues predominate over residues 572–587 (HHPHQHPHPHPHQHPH). Composition is skewed to low complexity over residues 689 to 700 (HQHPPSLHQQQQ), 707 to 737 (QQQQ…QQHH), and 745 to 759 (QHQQ…QQQP). Positions 852–868 (IPPPRIGTPTSPPPPVA) are enriched in pro residues. 2 stretches are compositionally biased toward gly residues: residues 883-894 (QNGGAVVGGGGA) and 931-945 (NGGG…GGGA). A compositionally biased stretch (polar residues) spans 961-970 (DESNYAVTEL).

The protein belongs to the tweety family.

The protein resides in the cell membrane. Functionally, non-essential protein that probably acts as a chloride channel. This Drosophila melanogaster (Fruit fly) protein is Protein tweety (tty).